Here is a 462-residue protein sequence, read N- to C-terminus: Coagulation factor IX (462 aa).

Positions 1–21 (MADAPGLIPIFLLGYLLSTEC) are cleaved as a signal peptide. The propeptide occupies 22–39 (AVFLDRENATKILTRPKR). The Ca(2+) site is built by Tyr40, Asn41, Glu46, Glu47, Glu54, Glu56, Glu59, Glu60, Glu65, Glu66, and Glu69. Residues 40-86 (YNSGKLEEFVQGNLERECIEERCSFEEAREVFENTEKTTEFWKQYVD) enclose the Gla domain. 4-carboxyglutamate occurs at positions 46, 47, 54, 56, 59, 60, 65, 66, 69, 72, and 75. Glu54 is a binding site for Mg(2+). Residues Cys57 and Cys62 are joined by a disulfide bond. Glu59 contacts Mg(2+). Mg(2+) is bound at residue Glu65. Mg(2+) is bound at residue Glu69. Glu75 lines the Ca(2+) pocket. Glu75 serves as a coordination point for Mg(2+). O-linked (GalNAc...) threonine glycosylation is present at Thr78. Positions 79, 86, 87, and 89 each coordinate Ca(2+). Position 79 is a 4-carboxyglutamate (Glu79). Glu79 is a Mg(2+) binding site. An EGF-like; calcium-binding domain is found at 86 to 122 (DGDQCESNPCLNGGICKDDINSYECWCQAGFEGRNCE). 10 disulfide bridges follow: Cys90-Cys101, Cys95-Cys110, Cys112-Cys121, Cys127-Cys138, Cys134-Cys148, Cys150-Cys163, Cys171-Cys336, Cys253-Cys269, Cys383-Cys397, and Cys408-Cys436. Ser92 carries O-linked (Glc...) serine glycosylation. Ca(2+) is bound by residues Asp103 and Asp104. A (3R)-3-hydroxyaspartate modification is found at Asp103. Ser107 carries the post-translational modification Phosphoserine. Positions 186–227 (AETVFSNTDYGNSTELILDDITNSTILDNLTENSEPINDFTR) are cleaved as a propeptide — activation peptide. Position 195 is a sulfotyrosine (Tyr195). At Ser198 the chain carries Phosphoserine. Position 199 is a phosphothreonine; alternate (Thr199). An O-linked (GalNAc...) threonine; alternate glycan is attached at Thr199. 2 N-linked (GlcNAc...) asparagine glycosylation sites follow: Asn208 and Asn214. O-linked (GalNAc...) threonine glycans are attached at residues Thr216 and Thr226. A Peptidase S1 domain is found at 228 to 460 (VVGGENAKPG…YVNWIKEKTK (233 aa)). His268 acts as the Charge relay system in catalysis. 5 residues coordinate Ca(2+): Glu282, Asn284, Glu287, Glu289, and Glu292. N-linked (GlcNAc...) asparagine glycosylation occurs at Asn307. Residue Asp316 is the Charge relay system of the active site. Catalysis depends on Ser412, which acts as the Charge relay system.

It belongs to the peptidase S1 family. Heterodimer of a light chain and a heavy chain; disulfide-linked. Interacts (inactive and activated) with F11 (activated) in calcium-dependent manner. Interacts with SERPINC1. Interacts (inactive and activated) with nitrophorin-2, an anticoagulant protein from Rhodnius prolixus. Post-translationally, activated by factor XIa, which excises the activation peptide. The propeptide can also be removed by snake venom protease. Activated by coagulation factor VIIa-tissue factor (F7-F3) complex in calcium-dependent manner. In terms of processing, the iron and 2-oxoglutarate dependent 3-hydroxylation of aspartate and asparagine is (R) stereospecific within EGF domains. Predominantly O-glucosylated at Ser-92 by POGLUT1 in vitro.

It is found in the secreted. The enzyme catalyses Selective cleavage of Arg-|-Ile bond in factor X to form factor Xa.. Functionally, factor IX is a vitamin K-dependent plasma protein that participates in the intrinsic pathway of blood coagulation by converting factor X to its active form in the presence of Ca(2+) ions, phospholipids, and factor VIIIa. This is Coagulation factor IX (F9) from Rattus norvegicus (Rat).